The chain runs to 107 residues: Magnetosome protein MmsF (107 aa).

Residues 1–13 (MTEAILRSTLGAR) lie on the Cytoplasmic side of the membrane. A helical transmembrane segment spans residues 14 to 34 (TTVMAALSYLSVLCFVPLLVD). At 35–46 (RDDEFVYFHAKQ) the chain is on the lumenal side. The helical transmembrane segment at 47–67 (GLVIWMWGVLALFALHVPVLG) threads the bilayer. The Cytoplasmic portion of the chain corresponds to 68–69 (KW). Residues 70–90 (IFGFSSMGVLVFSLLGLVSVV) traverse the membrane as a helical segment. The Lumenal portion of the chain corresponds to 91 to 107 (FQRAWKLPLISWVAHRI).

It belongs to the magnetosome MamF/MmsF protein family. In terms of assembly, may oligomerize.

The protein resides in the magnetosome membrane. Its activity is regulated as follows. Its function may be negatively regulated by one of the MamGFDC proteins. Functionally, plays a major role in synthesis of cubooctahedral magnetite crystals by controlling crystal growth and morphology after nucleation. Has a partially redundant function with MamF. When overexpressed in E.coli the soluble protein self assembles into shells of about 36 nm. This protein mediates the formation of magnetite nanoparticles from a solution of Fe(2+) and Fe(3+) sulfate; the crystals are larger and lack alternative iron oxide/oxyhydroxide species seen in the protein's absence. The sequence is that of Magnetosome protein MmsF from Paramagnetospirillum magneticum (strain ATCC 700264 / AMB-1) (Magnetospirillum magneticum).